The sequence spans 387 residues: 3-ketoacyl-CoA thiolase (387 aa).

Residue Cys91 is the Acyl-thioester intermediate of the active site. Active-site proton acceptor residues include His343 and Cys373.

This sequence belongs to the thiolase-like superfamily. Thiolase family. Heterotetramer of two alpha chains (FadB) and two beta chains (FadA).

It localises to the cytoplasm. The enzyme catalyses an acyl-CoA + acetyl-CoA = a 3-oxoacyl-CoA + CoA. It participates in lipid metabolism; fatty acid beta-oxidation. In terms of biological role, catalyzes the final step of fatty acid oxidation in which acetyl-CoA is released and the CoA ester of a fatty acid two carbons shorter is formed. This Escherichia coli O1:K1 / APEC protein is 3-ketoacyl-CoA thiolase.